The following is a 180-amino-acid chain: uncharacterized protein (180 aa).

Transmembrane regions (helical) follow at residues 4 to 24 (KSNI…LSLF), 25 to 45 (IKNF…WLFI), 57 to 77 (NLLA…GIIY), 81 to 101 (FLDI…GILF), 124 to 144 (FLTL…LLIL), and 156 to 176 (IIRT…FYTF).

Its subcellular location is the cell membrane. This is an uncharacterized protein from Methanocaldococcus jannaschii (strain ATCC 43067 / DSM 2661 / JAL-1 / JCM 10045 / NBRC 100440) (Methanococcus jannaschii).